Reading from the N-terminus, the 348-residue chain is MKIIQEIPEKNIIKLIPENLDDLWHLSNIIQPYNAIYAVTERRTEDKGDKLRADRGTKRKVFLGIKAEKINFHEDFNRLRVSGKIIHAPEDIPIGSYHTIDIEPLLQVSVQKNWKKWDLARLKDAEDSSKKPKVVVVIMDDSEADIFLVREFGIKELASIKSGVSKKLDYKQNEQAKFSYYSDIINSISEFEGKILFAGPGFGKNNIQNYISEKHKDLAPNVVVESANHTGKSGLSEILKSGIIDKIYGEARISKETQIIEKLLEEISKKGLAAYGIESVNNAMNYSAIDTLLLTDEYLRRNRRTIEELMNSVENINGSILIISTEHDAGKQLKALGGISALLRFPIE.

It belongs to the eukaryotic release factor 1 family. Pelota subfamily. As to quaternary structure, monomer. It depends on a divalent metal cation as a cofactor.

It is found in the cytoplasm. Its function is as follows. May function in recognizing stalled ribosomes, interact with stem-loop structures in stalled mRNA molecules, and effect endonucleolytic cleavage of the mRNA. May play a role in the release non-functional ribosomes and degradation of damaged mRNAs. Has endoribonuclease activity. In Methanococcus maripaludis (strain C7 / ATCC BAA-1331), this protein is Protein pelota homolog.